Consider the following 115-residue polypeptide: Thiosulfate:glutathione sulfurtransferase (115 aa).

Positions 17 to 115 (ASGRARLFDV…AYREWLEKES (99 aa)) constitute a Rhodanese domain. The active-site Cysteine persulfide intermediate is cysteine 79.

In terms of tissue distribution, highly expressed in kidney, liver and skeletal muscle. Lower levels of expression in heart, colon, thymus, spleen, placenta and lung. Weakly expressed in brain, small intestine and peripheral blood leukocytes. Expressed at high levels in the breast carcinoma cell lines MCF-7 and MDA-MB-468 and at a lower level in the breast carcinoma cell line MDA-MB-231, the colon carcinoma call line LoVo and the lung carcinoma cell line A-549. No expression in the cell lines EFO-27 and HeLa, or the normal breast tissue cell lines MCF-10A and H184A1. Detected in invasive ductal carcinoma, but not in the adjacent tissues.

The protein localises to the cytoplasm. The protein resides in the perinuclear region. It catalyses the reaction thiosulfate + glutathione = S-sulfanylglutathione + sulfite + H(+). The catalysed reaction is thiosulfate + 2 glutathione = glutathione disulfide + hydrogen sulfide + sulfite + 2 H(+). With respect to regulation, GSS(-) is a potent inhibitor of TSTD1, since the presence of the sulfur dioxygenase (SDO) strongly increases the TSTD1 catalytic activity. In terms of biological role, thiosulfate:glutathione sulfurtransferase (TST) required to produce S-sulfanylglutathione (GSS(-)), a central intermediate in hydrogen sulfide metabolism. Provides the link between the first step in mammalian H(2)S metabolism performed by the sulfide:quinone oxidoreductase (SQOR) which catalyzes the conversion of H(2)S to thiosulfate, and the sulfur dioxygenase (SDO) which uses GSS(-) as substrate. The thermodynamic coupling of the irreversible SDO and reversible TST reactions provides a model for the physiologically relevant reaction with thiosulfate as the sulfane donor. GSS(-) spontaneously reacts with glutathione to form glutathione disulfide. This chain is Thiosulfate:glutathione sulfurtransferase (TSTD1), found in Homo sapiens (Human).